We begin with the raw amino-acid sequence, 273 residues long: 4-hydroxy-tetrahydrodipicolinate reductase (273 aa).

Residues 12-17 (GAGGRM) and Glu-38 each bind NAD(+). Arg-39 provides a ligand contact to NADP(+). NAD(+) is bound by residues 102-104 (GTT) and 126-129 (AANF). His-159 serves as the catalytic Proton donor/acceptor. Residue His-160 coordinates (S)-2,3,4,5-tetrahydrodipicolinate. Lys-163 functions as the Proton donor in the catalytic mechanism. Position 169-170 (169-170 (GT)) interacts with (S)-2,3,4,5-tetrahydrodipicolinate.

The protein belongs to the DapB family. In terms of assembly, homotetramer.

The protein resides in the cytoplasm. It catalyses the reaction (S)-2,3,4,5-tetrahydrodipicolinate + NAD(+) + H2O = (2S,4S)-4-hydroxy-2,3,4,5-tetrahydrodipicolinate + NADH + H(+). The enzyme catalyses (S)-2,3,4,5-tetrahydrodipicolinate + NADP(+) + H2O = (2S,4S)-4-hydroxy-2,3,4,5-tetrahydrodipicolinate + NADPH + H(+). Its pathway is amino-acid biosynthesis; L-lysine biosynthesis via DAP pathway; (S)-tetrahydrodipicolinate from L-aspartate: step 4/4. Its function is as follows. Catalyzes the conversion of 4-hydroxy-tetrahydrodipicolinate (HTPA) to tetrahydrodipicolinate. The chain is 4-hydroxy-tetrahydrodipicolinate reductase from Klebsiella pneumoniae subsp. pneumoniae (strain ATCC 700721 / MGH 78578).